The primary structure comprises 198 residues: Transmembrane protein 9B (198 aa).

A signal peptide spans 1 to 33 (MATLWGGLLRLGSLLSLSCLALSVLLLAQLSDA). The N-linked (GlcNAc...) asparagine glycan is linked to asparagine 60. The helical transmembrane segment at 105–125 (IIIYLSILGLLLLYMVYLTLV) threads the bilayer. Residues serine 142 and serine 189 each carry the phosphoserine modification.

This sequence belongs to the TMEM9 family. Post-translationally, N-glycosylated.

It is found in the lysosome membrane. The protein resides in the early endosome membrane. Its function is as follows. Enhances production of pro-inflammatory cytokines induced by TNF, IL1B, and TLR ligands. Has a role in TNF activation of both the NF-kappaB and MAPK pathways. The chain is Transmembrane protein 9B (TMEM9B) from Homo sapiens (Human).